The primary structure comprises 148 residues: Large ribosomal subunit protein bL9 (148 aa).

This sequence belongs to the bacterial ribosomal protein bL9 family.

Its function is as follows. Binds to the 23S rRNA. This Clostridium beijerinckii (strain ATCC 51743 / NCIMB 8052) (Clostridium acetobutylicum) protein is Large ribosomal subunit protein bL9.